The chain runs to 315 residues: Methionyl-tRNA formyltransferase (315 aa).

Position 114 to 117 (114 to 117 (SLLP)) interacts with (6S)-5,6,7,8-tetrahydrofolate.

Belongs to the Fmt family.

The enzyme catalyses L-methionyl-tRNA(fMet) + (6R)-10-formyltetrahydrofolate = N-formyl-L-methionyl-tRNA(fMet) + (6S)-5,6,7,8-tetrahydrofolate + H(+). Functionally, attaches a formyl group to the free amino group of methionyl-tRNA(fMet). The formyl group appears to play a dual role in the initiator identity of N-formylmethionyl-tRNA by promoting its recognition by IF2 and preventing the misappropriation of this tRNA by the elongation apparatus. The protein is Methionyl-tRNA formyltransferase of Corynebacterium efficiens (strain DSM 44549 / YS-314 / AJ 12310 / JCM 11189 / NBRC 100395).